Consider the following 313-residue polypeptide: Glutathione S-transferase omega-like 2 (313 aa).

Cysteine 49 (nucleophile) is an active-site residue. One can recognise a GST C-terminal domain in the interval proline 161–tyrosine 289.

This sequence belongs to the GST superfamily. Omega family.

It is found in the cytoplasm. The protein localises to the nucleus. It localises to the golgi apparatus. The catalysed reaction is RX + glutathione = an S-substituted glutathione + a halide anion + H(+). It carries out the reaction L-dehydroascorbate + 2 glutathione = glutathione disulfide + L-ascorbate. Active as '1-Cys' thiol transferase against beta-hydroxyethyl disulfide (HED), as dehydroascorbate reductase and as dimethylarsinic acid reductase, while not active against the standard GST substrate 1-chloro-2,4-dinitrobenzene (CDNB). May be involved in cell wall organization and biogenesis. The protein is Glutathione S-transferase omega-like 2 (gto2) of Schizosaccharomyces pombe (strain 972 / ATCC 24843) (Fission yeast).